The following is a 495-amino-acid chain: EF-hand calcium-binding domain-containing protein 14 (495 aa).

Disordered stretches follow at residues 1 to 50 and 381 to 404; these read MKKR…EEEE and TNKP…FTSK. The residue at position 17 (Ser-17) is a Phosphoserine. Residues 18-31 are compositionally biased toward basic residues; that stretch reads RRKKPKKGPSSHRL. The span at 37–50 shows a compositional bias: acidic residues; it reads PDSDSESSSEEEEE. EF-hand domains lie at 434–463 and 464–495; these read SSTE…WTSL and GSAM…ALGI. Asp-477, Asp-479, Asp-481, Arg-483, and Glu-488 together coordinate Ca(2+).

The polypeptide is EF-hand calcium-binding domain-containing protein 14 (EFCAB14) (Homo sapiens (Human)).